A 1171-amino-acid polypeptide reads, in one-letter code: ATP-dependent helicase/deoxyribonuclease subunit B (1171 aa).

The UvrD-like helicase ATP-binding domain maps to 1–343; sequence MSLRFVIGRA…LVAEENYRYR (343 aa). Position 8-15 (8-15) interacts with ATP; the sequence is GRAGSGKS. Positions 281–587 constitute a UvrD-like helicase C-terminal domain; it reads MEQPRFHSPA…QFANIPPSLD (307 aa). Residues cysteine 805, cysteine 1129, cysteine 1132, and cysteine 1138 each coordinate [4Fe-4S] cluster.

The protein belongs to the helicase family. AddB/RexB type 1 subfamily. In terms of assembly, heterodimer of AddA and AddB. The cofactor is Mg(2+). [4Fe-4S] cluster serves as cofactor.

The heterodimer acts as both an ATP-dependent DNA helicase and an ATP-dependent, dual-direction single-stranded exonuclease. Recognizes the chi site generating a DNA molecule suitable for the initiation of homologous recombination. The AddB subunit has 5' -&gt; 3' nuclease activity but not helicase activity. This chain is ATP-dependent helicase/deoxyribonuclease subunit B, found in Bacillus thuringiensis subsp. konkukian (strain 97-27).